The primary structure comprises 236 residues: Pyridoxine 5'-phosphate synthase (236 aa).

N7 provides a ligand contact to 3-amino-2-oxopropyl phosphate. 9-10 is a binding site for 1-deoxy-D-xylulose 5-phosphate; sequence DH. A 3-amino-2-oxopropyl phosphate-binding site is contributed by R18. Residue H43 is the Proton acceptor of the active site. 1-deoxy-D-xylulose 5-phosphate-binding residues include R45 and H50. E69 serves as the catalytic Proton acceptor. Residue T99 participates in 1-deoxy-D-xylulose 5-phosphate binding. Residue H190 is the Proton donor of the active site. 3-amino-2-oxopropyl phosphate is bound by residues G191 and 212–213; that span reads GH.

This sequence belongs to the PNP synthase family. In terms of assembly, homooctamer; tetramer of dimers.

Its subcellular location is the cytoplasm. The catalysed reaction is 3-amino-2-oxopropyl phosphate + 1-deoxy-D-xylulose 5-phosphate = pyridoxine 5'-phosphate + phosphate + 2 H2O + H(+). The protein operates within cofactor biosynthesis; pyridoxine 5'-phosphate biosynthesis; pyridoxine 5'-phosphate from D-erythrose 4-phosphate: step 5/5. Functionally, catalyzes the complicated ring closure reaction between the two acyclic compounds 1-deoxy-D-xylulose-5-phosphate (DXP) and 3-amino-2-oxopropyl phosphate (1-amino-acetone-3-phosphate or AAP) to form pyridoxine 5'-phosphate (PNP) and inorganic phosphate. The polypeptide is Pyridoxine 5'-phosphate synthase (Desulfosudis oleivorans (strain DSM 6200 / JCM 39069 / Hxd3) (Desulfococcus oleovorans)).